The primary structure comprises 253 residues: 5-oxoprolinase subunit A (253 aa).

Belongs to the LamB/PxpA family. As to quaternary structure, forms a complex composed of PxpA, PxpB and PxpC.

The catalysed reaction is 5-oxo-L-proline + ATP + 2 H2O = L-glutamate + ADP + phosphate + H(+). Catalyzes the cleavage of 5-oxoproline to form L-glutamate coupled to the hydrolysis of ATP to ADP and inorganic phosphate. The chain is 5-oxoprolinase subunit A from Bacillus cereus (strain 03BB102).